Consider the following 161-residue polypeptide: Small ribosomal subunit protein uS9 (161 aa).

A compositionally biased stretch (polar residues) spans 1–21 (MATLQSLADLNRANTQTSNPE). Residues 1-25 (MATLQSLADLNRANTQTSNPENEAP) are disordered.

Belongs to the universal ribosomal protein uS9 family.

The chain is Small ribosomal subunit protein uS9 from Methylorubrum extorquens (strain CM4 / NCIMB 13688) (Methylobacterium extorquens).